The following is a 339-amino-acid chain: NADPH dehydrogenase (339 aa).

24 to 27 is a binding site for FMN; the sequence is SPMC. Residue Y29 coordinates substrate. Residues A61 and Q103 each coordinate FMN. 165 to 168 lines the substrate pocket; the sequence is HGAH. Residues R216 and 308-309 each bind FMN; that span reads AR.

Belongs to the NADH:flavin oxidoreductase/NADH oxidase family. NamA subfamily. In terms of assembly, homotetramer. Requires FMN as cofactor.

The catalysed reaction is A + NADPH + H(+) = AH2 + NADP(+). Its function is as follows. Catalyzes the reduction of the double bond of an array of alpha,beta-unsaturated aldehydes and ketones. It also reduces the nitro group of nitroester and nitroaromatic compounds. It could have a role in detoxification processes. This Bacillus licheniformis (strain ATCC 14580 / DSM 13 / JCM 2505 / CCUG 7422 / NBRC 12200 / NCIMB 9375 / NCTC 10341 / NRRL NRS-1264 / Gibson 46) protein is NADPH dehydrogenase.